The chain runs to 178 residues: Large ribosomal subunit protein uL6 (178 aa).

It belongs to the universal ribosomal protein uL6 family. As to quaternary structure, part of the 50S ribosomal subunit.

In terms of biological role, this protein binds to the 23S rRNA, and is important in its secondary structure. It is located near the subunit interface in the base of the L7/L12 stalk, and near the tRNA binding site of the peptidyltransferase center. In Maridesulfovibrio salexigens (strain ATCC 14822 / DSM 2638 / NCIMB 8403 / VKM B-1763) (Desulfovibrio salexigens), this protein is Large ribosomal subunit protein uL6.